The sequence spans 55 residues: Large ribosomal subunit protein bL33 (55 aa).

This sequence belongs to the bacterial ribosomal protein bL33 family.

In Leifsonia xyli subsp. xyli (strain CTCB07), this protein is Large ribosomal subunit protein bL33.